The following is a 222-amino-acid chain: uncharacterized protein (222 aa).

The tat-type signal signal peptide spans 1-27; that stretch reads MSFTRRKFVLGMGTVIFFTGSASSLLA. 3 consecutive 4Fe-4S ferredoxin-type domains span residues 37 to 67, 83 to 114, and 115 to 144; these read YAMI…AQGS, TQYH…RDEQ, and GIVR…LNPV. Residues Cys46, Cys49, Cys52, Cys56, Cys92, Cys95, Cys100, Cys104, Cys124, Cys127, Cys130, Cys134, Cys151, Cys154, Cys167, and Cys171 each contribute to the [4Fe-4S] cluster site.

Post-translationally, exported by the Tat system. The position of the signal peptide cleavage has not been experimentally proven. Can also be exported by the Sec system.

This is an uncharacterized protein from Escherichia coli (strain K12).